Consider the following 226-residue polypeptide: MNENLFSSFITPTLMGLPIIILIIMFPPVIMTSSKRLVNNRFHTFQQWLIKLITKQMMAIHSPKGRTWSLMLASLIIFIGSTNLLGLLPHTFTPTTQLSMNLGMAIPPWAGAVILGFRHKMKDSLAHFLPQGTPIPLIPMLVIIETISLFIQPMALAVRLTANITAGHLLMHLIGGATLVLTSISLPTAMITFIILIMLTILEFAVALIQAYVFTLLVSLYLHDNT.

Transmembrane regions (helical) follow at residues 10-30 (ITPT…PPVI), 68-88 (WSLM…LGLL), 97-117 (QLSM…ILGF), 138-158 (IPML…ALAV), 164-184 (ITAG…LTSI), and 189-209 (AMIT…VALI).

The protein belongs to the ATPase A chain family. Component of the ATP synthase complex composed at least of ATP5F1A/subunit alpha, ATP5F1B/subunit beta, ATP5MC1/subunit c (homooctomer), MT-ATP6/subunit a, MT-ATP8/subunit 8, ATP5ME/subunit e, ATP5MF/subunit f, ATP5MG/subunit g, ATP5MK/subunit k, ATP5MJ/subunit j, ATP5F1C/subunit gamma, ATP5F1D/subunit delta, ATP5F1E/subunit epsilon, ATP5PF/subunit F6, ATP5PB/subunit b, ATP5PD/subunit d, ATP5PO/subunit OSCP. ATP synthase complex consists of a soluble F(1) head domain (subunits alpha(3) and beta(3)) - the catalytic core - and a membrane F(0) domain - the membrane proton channel (subunits c, a, 8, e, f, g, k and j). These two domains are linked by a central stalk (subunits gamma, delta, and epsilon) rotating inside the F1 region and a stationary peripheral stalk (subunits F6, b, d, and OSCP). Interacts with DNAJC30; interaction is direct.

The protein resides in the mitochondrion inner membrane. The enzyme catalyses H(+)(in) = H(+)(out). Subunit a, of the mitochondrial membrane ATP synthase complex (F(1)F(0) ATP synthase or Complex V) that produces ATP from ADP in the presence of a proton gradient across the membrane which is generated by electron transport complexes of the respiratory chain. ATP synthase complex consist of a soluble F(1) head domain - the catalytic core - and a membrane F(1) domain - the membrane proton channel. These two domains are linked by a central stalk rotating inside the F(1) region and a stationary peripheral stalk. During catalysis, ATP synthesis in the catalytic domain of F(1) is coupled via a rotary mechanism of the central stalk subunits to proton translocation. With the subunit c (ATP5MC1), forms the proton-conducting channel in the F(0) domain, that contains two crucial half-channels (inlet and outlet) that facilitate proton movement from the mitochondrial intermembrane space (IMS) into the matrix. Protons are taken up via the inlet half-channel and released through the outlet half-channel, following a Grotthuss mechanism. This Cricetulus griseus (Chinese hamster) protein is ATP synthase F(0) complex subunit a.